Reading from the N-terminus, the 150-residue chain is Putative biopolymer transport protein ExbB-like 2 (150 aa).

Transmembrane regions (helical) follow at residues 5 to 25, 63 to 83, and 97 to 117; these read VDYG…AIAI, APYI…MDLG, and LALA…AIVI.

Belongs to the ExbB/TolQ family.

It localises to the cell inner membrane. This Helicobacter pylori (strain J99 / ATCC 700824) (Campylobacter pylori J99) protein is Putative biopolymer transport protein ExbB-like 2.